Here is an 815-residue protein sequence, read N- to C-terminus: Echinoderm microtubule-associated protein-like 1 (815 aa).

The stretch at 31–72 (SMEVTDRIASLEQRVQMQEDDIQLLKSALADVVRRLNITEEQ) forms a coiled coil. Positions 77 to 179 (NRKGPTKARP…NSESKPKEPV (103 aa)) are disordered. Polar residues predominate over residues 92-101 (PLRTTVNNGT). S113 bears the Phosphoserine mark. Over residues 126 to 138 (TKSNIKRTSSSER) the composition is skewed to polar residues. Basic and acidic residues predominate over residues 143–153 (GRRESNGDSRG). Residues 156 to 168 (NRTGSTSSSSSGK) show a composition bias toward low complexity. The tandem atypical propeller in EMLs stretch occupies residues 176–815 (KEPVFSAEEG…DTSIMQWRVI (640 aa)). 12 WD repeats span residues 261-310 (EQLQ…IWDS), 315-358 (TLHV…VWDW), 363-400 (KLAD…FWTL), 409-446 (QGLF…VWGK), 450-489 (RISY…SWSG), 493-530 (KLRK…LQGT), 535-572 (FTPI…LWDA), 578-613 (VWDK…VFDT), 617-655 (DLVT…IYGV), 664-701 (RVGK…YWVP), 709-768 (SVET…LFSY), and 775-814 (APSH…QWRV).

It belongs to the WD repeat EMAP family. In terms of assembly, homotrimer; self-association is mediated by the N-terminal coiled coil. Does not interact with EML3. Binds repolymerizing microtubules. Binds unpolymerized tubulins via its WD repeat region. Interacts with TASOR. In terms of tissue distribution, ubiquitous; expressed in most tissues with the exception of thymus and peripheral blood lymphocytes.

It localises to the cytoplasm. The protein resides in the perinuclear region. The protein localises to the cytoskeleton. Its function is as follows. Modulates the assembly and organization of the microtubule cytoskeleton, and probably plays a role in regulating the orientation of the mitotic spindle and the orientation of the plane of cell division. Required for normal proliferation of neuronal progenitor cells in the developing brain and for normal brain development. Does not affect neuron migration per se. In Homo sapiens (Human), this protein is Echinoderm microtubule-associated protein-like 1 (EML1).